Reading from the N-terminus, the 176-residue chain is Nascent polypeptide-associated complex subunit alpha (176 aa).

The NAC-A/B domain occupies 14 to 78 (SKNEKKAREL…AKVDDFTQRL (65 aa)). Residues 85–127 (LQQNEGVLPAGQDAVSKDPQSIQADMQAAADSATDKPSADDAV) are disordered. In terms of domain architecture, UBA spans 137-176 (LNADDIELVMQQAGVPRAKAAKALKEHDSDIVNAIMALSG).

Belongs to the NAC-alpha family. Part of the nascent polypeptide-associated complex (NAC), consisting of EGD2 and EGD1. NAC associates with ribosomes via EGD1.

Its subcellular location is the cytoplasm. The protein resides in the nucleus. In terms of biological role, component of the nascent polypeptide-associated complex (NAC), a dynamic component of the ribosomal exit tunnel, protecting the emerging polypeptides from interaction with other cytoplasmic proteins to ensure appropriate nascent protein targeting. The NAC complex also promotes mitochondrial protein import by enhancing productive ribosome interactions with the outer mitochondrial membrane and blocks the inappropriate interaction of ribosomes translating non-secretory nascent polypeptides with translocation sites in the membrane of the endoplasmic reticulum. EGD2 may also be involved in transcription regulation. This Kluyveromyces lactis (strain ATCC 8585 / CBS 2359 / DSM 70799 / NBRC 1267 / NRRL Y-1140 / WM37) (Yeast) protein is Nascent polypeptide-associated complex subunit alpha (EGD2).